We begin with the raw amino-acid sequence, 297 residues long: Homoserine kinase (297 aa).

82–92 (PVSRGLGSSAA) contacts ATP.

It belongs to the GHMP kinase family. Homoserine kinase subfamily.

The protein localises to the cytoplasm. The catalysed reaction is L-homoserine + ATP = O-phospho-L-homoserine + ADP + H(+). The protein operates within amino-acid biosynthesis; L-threonine biosynthesis; L-threonine from L-aspartate: step 4/5. Functionally, catalyzes the ATP-dependent phosphorylation of L-homoserine to L-homoserine phosphate. The chain is Homoserine kinase from Clostridium botulinum (strain Kyoto / Type A2).